We begin with the raw amino-acid sequence, 205 residues long: Cytochrome c biogenesis ATP-binding export protein CcmA (205 aa).

Residues 2–204 enclose the ABC transporter domain; it reads LEVSNLTAIR…SPKLRKIKLG (203 aa). 34–41 contributes to the ATP binding site; the sequence is GRNGTGKT.

The protein belongs to the ABC transporter superfamily. CcmA exporter (TC 3.A.1.107) family. The complex is composed of two ATP-binding proteins (CcmA) and two transmembrane proteins (CcmB).

The protein resides in the cell inner membrane. It carries out the reaction heme b(in) + ATP + H2O = heme b(out) + ADP + phosphate + H(+). Its function is as follows. Part of the ABC transporter complex CcmAB involved in the biogenesis of c-type cytochromes; once thought to export heme, this seems not to be the case, but its exact role is uncertain. Responsible for energy coupling to the transport system. This Vibrio vulnificus (strain CMCP6) protein is Cytochrome c biogenesis ATP-binding export protein CcmA.